The chain runs to 72 residues: Gas vesicle protein A (72 aa).

Belongs to the gas vesicle GvpA family. The gas vesicle shell is 2 nm thick and consists of a single layer of this protein. It forms helical ribs nearly perpendicular to the long axis of the vesicle.

It localises to the gas vesicle shell. Its function is as follows. Gas vesicles are hollow, gas filled proteinaceous nanostructures found in some microorganisms. During planktonic growth they allow positioning of the organism at a favorable depth for light or nutrient acquisition. GvpA forms the protein shell. The sequence is that of Gas vesicle protein A from Planktothrix agardhii (Oscillatoria agardhii).